Reading from the N-terminus, the 355-residue chain is Protein RecA (355 aa).

Position 67–74 (67–74 (GPESSGKT)) interacts with ATP.

It belongs to the RecA family.

Its subcellular location is the cytoplasm. Functionally, can catalyze the hydrolysis of ATP in the presence of single-stranded DNA, the ATP-dependent uptake of single-stranded DNA by duplex DNA, and the ATP-dependent hybridization of homologous single-stranded DNAs. It interacts with LexA causing its activation and leading to its autocatalytic cleavage. The chain is Protein RecA from Proteus mirabilis (strain HI4320).